A 1122-amino-acid chain; its full sequence is Adhesin P1 (1122 aa).

Residues 1–30 form the signal peptide; that stretch reads MKKLIFKLSVGITPLALIGLGSFGLAVSGA. 3 disordered regions span residues 183–209, 244–273, and 544–563; these read AGDT…GGAV, DYNS…GGRT, and QNSG…NGNE. Over residues 195–208 the composition is skewed to gly residues; that stretch reads AGGGSGSSAAGGGA. Residues 259 to 273 are compositionally biased toward polar residues; it reads LDSSESSESINGGRT. Residues 997–1021 traverse the membrane as a helical segment; that stretch reads VLPVAISIPIIIIALALALGLGIGI. The tract at residues 1066-1122 is disordered; sequence KTPQMLQANKKDGASSPSKPSAPAAKKPTGPTKPSAPGAKPTAPAKPKAPAPTKKIE. Residues 1079 to 1122 show a composition bias toward low complexity; it reads ASSPSKPSAPAAKKPTGPTKPSAPGAKPTAPAKPKAPAPTKKIE.

This sequence belongs to the adhesin P1 family.

The protein resides in the cell membrane. In terms of biological role, could be involved in cytadherence. This is Adhesin P1 (gapA) from Mycoplasmoides gallisepticum (Mycoplasma gallisepticum).